The following is a 250-amino-acid chain: tRNA (guanine-N(1)-)-methyltransferase (250 aa).

S-adenosyl-L-methionine-binding positions include G115 and 135-140 (LGDFVL).

It belongs to the RNA methyltransferase TrmD family. In terms of assembly, homodimer.

Its subcellular location is the cytoplasm. The enzyme catalyses guanosine(37) in tRNA + S-adenosyl-L-methionine = N(1)-methylguanosine(37) in tRNA + S-adenosyl-L-homocysteine + H(+). Specifically methylates guanosine-37 in various tRNAs. The sequence is that of tRNA (guanine-N(1)-)-methyltransferase from Legionella pneumophila (strain Paris).